Here is a 385-residue protein sequence, read N- to C-terminus: Non-structural maintenance of chromosomes element 4 homolog A (385 aa).

The interval 1–69 (MSGDSSGRGP…PSDSGDEMMD (69 aa)) is disordered. Basic and acidic residues-rich tracts occupy residues 10 to 21 (PEGRGRGRDPHR) and 42 to 55 (SARE…RPSL). Positions 56–68 (EDTEPSDSGDEMM) are enriched in acidic residues. Residue Thr-345 is modified to Phosphothreonine. Ser-377 is modified (phosphoserine).

The protein belongs to the NSE4 family. Component of the SMC5-SMC6 complex which consists at least of SMC5, SMC6, NSMCE2, NSMCE1, NSMCE4A or EID3 and NSMCE3. NSMCE1, NSMCE4A or EID3 and NSMCE3 probably form a subcomplex that bridges the head domains of the SMC5:SMC6 heterodimer. Interacts with NSMCE3.

It is found in the nucleus. The protein resides in the chromosome. It localises to the telomere. Functionally, component of the SMC5-SMC6 complex, a complex involved in DNA double-strand breaks by homologous recombination. The complex may promote sister chromatid homologous recombination by recruiting the SMC1-SMC3 cohesin complex to double-strand breaks. The complex is required for telomere maintenance via recombination in ALT (alternative lengthening of telomeres) cell lines and mediates sumoylation of shelterin complex (telosome) components which is proposed to lead to shelterin complex disassembly in ALT-associated PML bodies (APBs). Is involved in positive regulation of response to DNA damage stimulus. This is Non-structural maintenance of chromosomes element 4 homolog A (NSMCE4A) from Homo sapiens (Human).